The following is a 347-amino-acid chain: Methylthioribose-1-phosphate isomerase (347 aa).

Substrate contacts are provided by residues 45-47 (RGA), arginine 88, and glutamine 197. The active-site Proton donor is the aspartate 238. Residue 248 to 249 (NK) participates in substrate binding.

Belongs to the eIF-2B alpha/beta/delta subunits family. MtnA subfamily.

It carries out the reaction 5-(methylsulfanyl)-alpha-D-ribose 1-phosphate = 5-(methylsulfanyl)-D-ribulose 1-phosphate. It functions in the pathway amino-acid biosynthesis; L-methionine biosynthesis via salvage pathway; L-methionine from S-methyl-5-thio-alpha-D-ribose 1-phosphate: step 1/6. In terms of biological role, catalyzes the interconversion of methylthioribose-1-phosphate (MTR-1-P) into methylthioribulose-1-phosphate (MTRu-1-P). The sequence is that of Methylthioribose-1-phosphate isomerase from Nostoc sp. (strain PCC 7120 / SAG 25.82 / UTEX 2576).